The primary structure comprises 760 residues: Prolyl endopeptidase FAP (760 aa).

Residues 1–4 (MKTW) are Cytoplasmic-facing. The helical; Signal-anchor for type II membrane protein transmembrane segment at 5 to 25 (VKIVFGVATSAVLALLVMCIV) threads the bilayer. At 26–760 (LRPSRVHNSE…FLKQCFSLSD (735 aa)) the chain is on the extracellular side. N-linked (GlcNAc...) asparagine glycosylation is found at Asn49, Asn92, and Asn99. Substrate is bound by residues Glu203 and Glu204. N-linked (GlcNAc...) asparagine glycosylation is found at Asn227 and Asn314. Cystine bridges form between Cys321/Cys332, Cys438/Cys441, and Cys448/Cys466. Catalysis depends on Ser624, which acts as the Charge relay system. A disulfide bond links Cys643 and Cys755. Asn679 is a glycosylation site (N-linked (GlcNAc...) asparagine). Catalysis depends on charge relay system residues Asp702 and His734.

Belongs to the peptidase S9B family. Homodimer; homodimerization is required for activity of both plasma membrane and soluble forms. The monomer is inactive. Heterodimer with DPP4. Interacts with PLAUR; the interaction occurs at the cell surface of invadopodia membranes. Interacts with ITGB1. Interacts with ITGA3. Associates with integrin alpha-3/beta-1; the association occurs in a collagen-dependent manner at the cell surface of invadopodia membranes. In terms of processing, N-glycosylated. Post-translationally, the N-terminus may be blocked. In terms of tissue distribution, expressed in adipose tissue. Expressed in the dermal fibroblasts in the fetal skin. Expressed in the granulation tissue of healing wounds and on reactive stromal fibroblast in epithelial cancers. Expressed in activated fibroblast-like synoviocytes from inflamed synovial tissues. Expressed in activated hepatic stellate cells (HSC) and myofibroblasts from cirrhotic liver, but not detected in normal liver. Expressed in glioma cells (at protein level). Expressed in glioblastomas and glioma cells. Isoform 1 and isoform 2 are expressed in melanoma, carcinoma and fibroblast cell lines.

The protein resides in the cell surface. The protein localises to the cell membrane. It localises to the cell projection. It is found in the lamellipodium membrane. Its subcellular location is the invadopodium membrane. The protein resides in the ruffle membrane. The protein localises to the membrane. It localises to the secreted. It is found in the cytoplasm. The enzyme catalyses Hydrolysis of Pro-|-Xaa &gt;&gt; Ala-|-Xaa in oligopeptides.. The catalysed reaction is Release of an N-terminal dipeptide, Xaa-Yaa-|-Zaa-, from a polypeptide, preferentially when Yaa is Pro, provided Zaa is neither Pro nor hydroxyproline.. Gelatinase activity is inhibited by serine-protease inhibitors, such as phenylmethylsulfonyl fluoride (PMSF), 4-(2-aminoethyl)-benzenesulfonyl fluoride hydrochloride (AEBSF), 4-amidino phenylsulfonyl fluoride (APSF) and diisopropyl fluorophosphate (DFP), N-ethylmaleimide (NEM) and phenylmethylsulfonyl fluoride (PMSF). Dipeptidyl peptidase activity is inhibited by 2,2'-azino-bis(3-ethylbenzthiazoline-6-sulfonic acid), diisopropylfluorophosphate (DFP). Prolyl endopeptidase activity is inhibited by the boronic acid peptide Ac-Gly-BoroPro, Ac-Gly-Pro-chloromethyl ketone and Thr-Ser-Gly-chloromethyl ketone. Functionally, cell surface glycoprotein serine protease that participates in extracellular matrix degradation and involved in many cellular processes including tissue remodeling, fibrosis, wound healing, inflammation and tumor growth. Both plasma membrane and soluble forms exhibit post-proline cleaving endopeptidase activity, with a marked preference for Ala/Ser-Gly-Pro-Ser/Asn/Ala consensus sequences, on substrate such as alpha-2-antiplasmin SERPINF2 and SPRY2. Degrade also gelatin, heat-denatured type I collagen, but not native collagen type I and IV, vitronectin, tenascin, laminin, fibronectin, fibrin or casein. Also has dipeptidyl peptidase activity, exhibiting the ability to hydrolyze the prolyl bond two residues from the N-terminus of synthetic dipeptide substrates provided that the penultimate residue is proline, with a preference for Ala-Pro, Ile-Pro, Gly-Pro, Arg-Pro and Pro-Pro. Natural neuropeptide hormones for dipeptidyl peptidase are the neuropeptide Y (NPY), peptide YY (PYY), substance P (TAC1) and brain natriuretic peptide 32 (NPPB). The plasma membrane form, in association with either DPP4, PLAUR or integrins, is involved in the pericellular proteolysis of the extracellular matrix (ECM), and hence promotes cell adhesion, migration and invasion through the ECM. Plays a role in tissue remodeling during development and wound healing. Participates in the cell invasiveness towards the ECM in malignant melanoma cancers. Enhances tumor growth progression by increasing angiogenesis, collagen fiber degradation and apoptosis and by reducing antitumor response of the immune system. Promotes glioma cell invasion through the brain parenchyma by degrading the proteoglycan brevican. Acts as a tumor suppressor in melanocytic cells through regulation of cell proliferation and survival in a serine protease activity-independent manner. The polypeptide is Prolyl endopeptidase FAP (Homo sapiens (Human)).